A 228-amino-acid polypeptide reads, in one-letter code: Thermonuclease (228 aa).

Residues 1-23 (MTEYLLSAGICMAIVSILLIGMA) form the signal peptide. The propeptide occupies 24–60 (ISNVSKGQYAKRFFFFATSCLVLTLVVVSSLSSSANA). The span at 58–70 (ANASQTDNGVNRS) shows a compositional bias: polar residues. Positions 58–83 (ANASQTDNGVNRSGSEDPTVYSATST) are disordered. Asp100 serves as a coordination point for Ca(2+). Arg114 is an active-site residue. Asp119 and Thr120 together coordinate Ca(2+). Active-site residues include Glu122 and Arg166.

Belongs to the thermonuclease family. Ca(2+) serves as cofactor.

It is found in the secreted. It carries out the reaction Endonucleolytic cleavage to nucleoside 3'-phosphates and 3'-phosphooligonucleotide end-products.. Functionally, enzyme that catalyzes the hydrolysis of both DNA and RNA at the 5' position of the phosphodiester bond. The polypeptide is Thermonuclease (nuc) (Staphylococcus aureus (strain Mu50 / ATCC 700699)).